Reading from the N-terminus, the 362-residue chain is Phosphoserine aminotransferase (362 aa).

L-glutamate contacts are provided by Ser-9 and Arg-42. Pyridoxal 5'-phosphate is bound by residues 76–77 (GR), Trp-102, Thr-153, Asp-174, and Gln-197. Residue Lys-198 is modified to N6-(pyridoxal phosphate)lysine. 239–240 (NT) contributes to the pyridoxal 5'-phosphate binding site.

It belongs to the class-V pyridoxal-phosphate-dependent aminotransferase family. SerC subfamily. Homodimer. It depends on pyridoxal 5'-phosphate as a cofactor.

Its subcellular location is the cytoplasm. The catalysed reaction is O-phospho-L-serine + 2-oxoglutarate = 3-phosphooxypyruvate + L-glutamate. It carries out the reaction 4-(phosphooxy)-L-threonine + 2-oxoglutarate = (R)-3-hydroxy-2-oxo-4-phosphooxybutanoate + L-glutamate. It functions in the pathway amino-acid biosynthesis; L-serine biosynthesis; L-serine from 3-phospho-D-glycerate: step 2/3. Its pathway is cofactor biosynthesis; pyridoxine 5'-phosphate biosynthesis; pyridoxine 5'-phosphate from D-erythrose 4-phosphate: step 3/5. In terms of biological role, catalyzes the reversible conversion of 3-phosphohydroxypyruvate to phosphoserine and of 3-hydroxy-2-oxo-4-phosphonooxybutanoate to phosphohydroxythreonine. This is Phosphoserine aminotransferase from Escherichia coli O1:K1 / APEC.